The sequence spans 733 residues: MGFSSGKSTKKKPLLFDIRLKNVDNDVILLKGPPNEAPSVLLSGCIVLSINEPMQIKSISLRLYGKIQIDVPLERPQDASSSSLSSSPPKIRKYNKVFYNYAWDNVNLKEYLSGLRGQSGLAGSSSSSNILGTRQRAQSTSSLKSLKGSSSPSSCTLDKGNYDFPFSAILPGSLPESVESLPNCFVTYSMESVIERSKNYSDLICRKNIRVLRTISPAAVELSETVCVDNSWPDKVDYSISVPNKAVAIGSATPINISIVPLSKGLKLGSIKVVLFENYQYCDPFPPVISENRQVTELNLEDPLNESSGEFNGNGCFVNNPFFQPDHSFQDKWEIDTILQIPNSLSNCVQDCDVRSNIKVRHKLKFFIILINPDGHKSELRASLPIQLFISPFVALSIKPLSSSNLYSLFSTTNQKDENSSQEEEEEYLFSRSASVTGLELLADMRSGGSVPTISDLMTPPNYEMHVYDRLYSGSFTRTAVETSGTCTPLGSECSTVEDQQQDLEDLRIRLTKIRNQRDNLGLPPSASSAAASRSLSPLLNVPAPEDGTERILPQSALGPNSGSVPGVHSNVSPVLLSRSPAPSVSAHEVLPVPSGLNYPETQNLNKVPSYGKAMKYDIIGEDLPPSYPCAIQNVQPRKPSRVHSRNSSTTLSSSIPTSFHSSSFMSSTASPISIINGSRSSSSGVSLNTLNELTSKTSNNPSSNSMKRSPTRRRATSLAGFMGGFLSKGNKR.

The PY-motif signature appears at 460-463 (PPNY). Residues 518–566 (RDNLGLPPSASSAAASRSLSPLLNVPAPEDGTERILPQSALGPNSGSVP) are disordered. Residues 523–540 (LPPSASSAAASRSLSPLL) are compositionally biased toward low complexity. Residues 625-628 (PPSY) carry the PY-motif motif. 2 disordered regions span residues 636–658 (QPRKPSRVHSRNSSTTLSSSIPT) and 693–733 (ELTS…GNKR). A compositionally biased stretch (low complexity) spans 646–658 (RNSSTTLSSSIPT).

The protein belongs to the arrestin family. As to quaternary structure, interacts with RSP5 via its 2 PY-motifs.

Involved in resistance to GST substrate o-dinitrobenzene (o-DNB). This Saccharomyces cerevisiae (strain ATCC 204508 / S288c) (Baker's yeast) protein is Protein ROG3 (ROG3).